The primary structure comprises 61 residues: uncharacterized protein (61 aa).

Transmembrane regions (helical) follow at residues 5-25 (MLYF…SLLL) and 29-49 (YILT…PWYT).

The protein localises to the membrane. This is an uncharacterized protein from Saccharomyces cerevisiae (strain ATCC 204508 / S288c) (Baker's yeast).